A 136-amino-acid chain; its full sequence is Small ribosomal subunit protein uS9 (136 aa).

Positions 111–136 are disordered; sequence DARRTEPHKPSRSTKGPRAKRQKSYR. Residues 120–136 show a composition bias toward basic residues; it reads PSRSTKGPRAKRQKSYR.

Belongs to the universal ribosomal protein uS9 family.

The chain is Small ribosomal subunit protein uS9 (rps9) from Methanocaldococcus jannaschii (strain ATCC 43067 / DSM 2661 / JAL-1 / JCM 10045 / NBRC 100440) (Methanococcus jannaschii).